A 145-amino-acid chain; its full sequence is Large ribosomal subunit protein uL16 (145 aa).

Belongs to the universal ribosomal protein uL16 family. Part of the 50S ribosomal subunit.

Its function is as follows. Binds 23S rRNA and is also seen to make contacts with the A and possibly P site tRNAs. This is Large ribosomal subunit protein uL16 from Agathobacter rectalis (strain ATCC 33656 / DSM 3377 / JCM 17463 / KCTC 5835 / VPI 0990) (Eubacterium rectale).